The sequence spans 7705 residues: MNDYEIRDLTGSSQKSNNQKISNNSGESAHFNGTSENVKTESDDDSTCSSSLNKLSNRHSEPMNHLSVGGFVAKDLLSSLTIPLPQTVIRTCQSIDIDTPDRSRNDKTLTSFFYSSCKNLLLTTIIPDPLDLVAAAVGQSTAQALLVAQIGWMVCVCCRCCLCKCIANGRGVRGQKKQIQEPTIADDDGRDLPYEVPGSIHIPKPVYNKKLSKSRSSSVPHVSVPSLVSSSADYKRLSMWETSLNVESDVEPLHTPPLVVGRKLDYIDKEGNNPSCCRERGTRKPGFRPLRGSGSPPPPDPSTSTKVAVTSASEVKKIKDHKKQLKKEKEKKKKMDKKQSSSGGGFFTRWFGGSGSNNSQQNLAEDVIDARSERKTAKQREQELLQRSERRSGGRTHSHEEYRRHQQPSLMVNTNFDEDDYATIDRVRRSNNREMSMPASPRNVHFVDETSGPLSRTMNESAFGDRAHLQYRPRAQKGAAGPTTRGAPTSSVNQLDEATLDLLRLSTEPSPVPSRRALPKSASLSSVQQKQPIKTADGGQLKIGSVYTWDQNSVDTTTDDERAKDFLRGDRSSRLSPQSERKNERQIQIRQQSSGPTNRRETEIEYEEKRQGPPVVRTTVEGKLKMEKIVGADLITVDSCISSAWTVRDTVTNYKIKSTIGKKSLILEEIKDGQSKYKITLIENGETKMEREASLDVPDFVNKKDYLAEVSKKLLSDLREDSESVSALTHIEVEIVEDVTNILKTYVIGERADDVLAEEQLRLHYEQTADKTPSPIPLEKVEKIYVDELQKDKIELEDPEKADIHLIKDGRHFEGEGALKRIRRFETEESIEKPTVIRMEPRCAHAFADCDVAKKDDTSNYTVKIAVPLVHTITFLLKKSKMMRQQKAAGYEMEQEGQRFEDETTLRRIKRYETEEEEEKQHVAVIQHVEEVKVATMKTQREVEAEGGQYEMSQEGIHLRGETTFKKRGKHLDSESSEERFMEREAEGGQYAMQMEGERLLGEKKFRSKGRHYESESEESMASWNGGSPTLVDLVKKESSSIFEATFETANNHSPIVAEVRRPKLKKENTTIGCTISNQKATSANAELTTKHVNTEKGSGKFRELGEEQAMMLCGFENQKSSKEEVTGSRQQKNEIKVAFAAGSAETENTTISTTIFHDADSFAVEGSSKSANSTATYGRFKEMSEENASNMVYLQKSESSSSNLSGAETKMKHIQRQSSEARFSEFKQVAESCAVMIKNTGVERGSTSSTVAEAATDLRIRRKDAKGEIIVFVLFKRVFGNYVHASMRLASSGSGLLRENRSELREMRSEEKRSNSMHHEESHYAHSSYEHTSEHYSQSSFYHQESDEHGLEPDQQVSKQLSSIERQLLKLDEVVIGNECTDVVEVKVTIKKREQNANQLIVVLEELLETAICGGIREIKRSIVDTSLESRVRKLEQSSLYSIIKKSSSKESVVHCGKPPLERQASLEGRFRMEESWSAVECKRRSSSIDRASLKLRASQEEVCTGFWNTSKGESTRRTILQKTKSVESMCLKTKSASSTSIDMFSDCQRATVSQTISTEIASHRREIVAAAFGISTQSLERLLKFVEIIDWENITMNVSQKEQLSANLQALTSAPVNLDIPSDLGRIVAPAEQDAYSDLIMRERAESRVFAQLRASADEITIREVALGSMSQLEQAAFMSLLITSVSRCDLRTIAPSNIIANTEIFYDVAEEKMSVSGVMKRESRKEHSSKKFTSSREEIIQGFWKGERDEERVVKTLKDRMVSFKHSLSVEAASSTSENVSLGMRKADQKSEFTISQKLSPKEIVSEAYGVSESKLDQFFQVMEKMDWSNIELGEKEHTALSANIRTLAPEQKVCDGILGKLKAPKQQDESVGTQIQEIRRATAVMSVRASLLLTISSNSNFSKNISDSEKAVFSNLISVITSHNLSTIGTSSETTTASISYQDIPEMLAASKLWISRNSEKLKKEIREPVIQTVESFWNTTNDQEKVAVLLNEKIDSIYSSLNTLAASMENEIISQELVRHTENAGKVNIKPISPRELVSSSFKITSSDLQQFFNVLEKMDWSQISLPAQEHAIISKNVRSLAPSASELSNILGKLRAPEMQEETTDLKIRQAQQARVVLNVSESMSNTISSSETFSRIPENKKATLTNLVGIITTQDLSTLGASSENQTIEMDYTEAKEELEASKKLVDKNLSVLKTEIRESGDEVVQGFWNTASDKEKVGAIICEKLKSIHHTLHTHAIRTVTESLSTDIQKEQQKLSTHHFVKLSTRDVVQAAFRISSESVDHLLTLVEKMDWSKIDLVEPVYSNISSNVQALATSSSQSSGILGKLLPPAPEEETTSKEIREINTAKCILNVISSLNSTITSDASLDMISESEQAIFSNIIGVMASNNLTTSSQSTSSSFGFNNVFELSEARRVLQESNKQNLIQKVRESSEELIHGIWSTASETEKVAIVVKEKLETVHQAMKTLAIQMATQSVNSELIGSEGNLASIKSITLPTREVISAAFGISNEVIQKMLEVLTKGEWSTISLPQSEYESISQNVRALAEPSFNCDSILGKINAPGPQTETTSHELIEKNTAAAVANVKAAVESVISKESSLAKLPADEKAIITNLAGLVLSKDVSSLCTSSETFGFDQRIFRNQNANISLGAVRSETLLQRLREPIENQVQGFWSTASNQEKASFIAKQKLDTMYDTMKVIAIQMISQTIDGDFSSASISSETFKNIDKAAREVVAAEFGIANESVQKALEVLNKVEWSDISLPEKLHQNISSNVRVLADSSYNCDSIIGKLNAPEPQSAYVDQQISEHQTLEVIANIKSAVSSVISNDSVLSKRSEDEKAVISNIANLIISCDLASMSSTSNSFEFQRDILEPQNANVLLGTPASQVFTRNLQEPIQSEVQGFWSTNSSQEKASLVIRQKLNVKYDAMKMMATEIAYQSLNSNITSEETNLESQKSFDKSIRESIMASFGVSSEHVQKTLEILSKSELSTIVLPAVEYEATVQNIKALSEPNFNCESILGKLNAPDPQSAVMDIIMNEQRKLTVVSNIQSAIESVISNDSSLEKLTEVDKSVILKISEIIVSHDLTALSSSCSDFNLLQESNTQEKADIFLKTPNSQMLIERLREPIEKQVQGFWSTASNSEKQEMFLKEKVETIHAMLQTFSASLVSETVQRDFMATVQSLAALRSIQLTPREILCAAFGISNEQIEQTFRGLDEVDWSHIDIPCALRDNLLVNLRIVNADAPNVFGNLISRPDENQETSTVLEEKNRIQFLLNLQRSLDQTVQMTSSLTRSDERIEVKVSNIISLISSENLGDLISQAVQLAQPNMSDETEKSFEIPRNILLNRVVPETSEESIQSFWKTSQLAEEASSTISEKLSMLQSEFVVSAAKQVSTSLTLDYRRKIFNQNSEIIFGDLTRDVVKAAFSVSDETLNTLFSQLEQSDWSQIKLSSKQKSILSANIKSLATSNLDTLIGQLMPREADSEQSEASLSERSSVEMENTFKIQQIIFDTVVRKFGSDEERASIINLIGLLTSVNLKAAIQVASFERLPDSLDSTASITPVFKIQEHVRQPTEQVVQGFWSKERHPNETVEVVNRKIEVLKSILNCYAVAECHKSLERSLEKPSQQDETCATRGVTEVVQNAFAVTEQSYSKILKVLGSMQNFEIPEAVKETISKNLKILNLPPVDTLLVSKYKESHVSKTVEEQELVQFMFNFKSALNSEIEMSQNVSKCIEEETVVLPNLVAILASANLATIVPTESRQLSDSENILNFSIQHEESERSAATVRDEINILRHYLQTFAIQKASSEVSRVIEIIKTSQSFHLVHTTMLEEIKTIQLRMEVLKRVSMNQSTAEELLQEAFQNSEQQMETFQRIVQNVHWEETKLTEEIIRNLRINMTAIPRFESTVGSLKAPDDQHESADSYISSTRRAEAVINLMAAADNAISTSSTLSMMESDERLLHKTILKTMAVCNLTTPASRSETETMTQGFYQKVEQCQTEQELAERPKINCEMKVLEISDDEVHGIWSSRKEQESSQKILLASELEKATLQTLASGDETNSIYTELASFGTREEIEKLVSIELRDIVEKSFGVSEESLNKLLNLIPKMDWSSLTMPIVQKELVIKNLALLLPAEALIMESVGTIQAPPEEEAFAELDLKQAREAKVMMDIQECVFTTCTGYTEMNKPDDAEITTFSALLGTLSICDLVTMASSNIQVDSKYDYYRRPAPKNAETTFTESNADAFSLALQEAGEVTSSGIWSTVSNSDAAKTTVSDKLISISKTEMSMKAVSENAVNQDHSLKKDSIEAVEMNIPDSRKEILQKNYSIDRSNSTVEMQGAIASEDIAIQYSAPRVDNVSQTMRSQSQKDLLFGGSFGELEPPLPQEEDVETTARQSRVYRSSSQVRAPSEESIQKTEALRRSESLESNARKTFVDRRRENVSLSRKASVERETNMEARVAKADQSIPVETLQKSKKQESIFSSVVESKDLNVCGSWTTAKPPIGAKVSLQTKKVEKEVTSATMTVASASVECEVGLESKREQSRDATGSMVRAKSIEEVEREFGVEVTSTEKTLEKRDQIESWIKSIPQRLEVEESAEFGNDEVIIGGVMGSLEAPLEQEEETEKLLTMKRSASEARSLKAATKESIEEADEFSKIEADQEILTVQKELVKATGILNAAASREINASSKMEYSKVPSEDVIELSLTESRRQSNSGQFKETKEEEIVGLWNTGTKGENASKVLPHKPPIDTASMKAKAAKQNSIEMTGSLQKSPSAEAMGIVSQKVTEGANSKFGIAQGAVETTLTASAQSGVTCRDISVSNIGVASETVTQFSNKETGIGFGASNLIAPPPESAETEFTGKISNLSQTSLNKMAASDVGTTVESKIQAPGDNYGDVSLLQKVASSDAITKAMQASRDSAISVDFRQDRETVSAEKSDLNFKSTNSETQKLKLFESKEEESGIFIRSSHEYEETQKTLRHRSASRESASRTVTAPTNQEVQMNFDKKVEDSVAEGSLSIGIVRESSQSEVMQHAERTSELTKLSMNEEVAGVRAVSETTNETFRGYQQGDVEVQTGAAMGRIEAPRPQRGEAEITQKLRRTLSVERSAKASEMAESQTVTQIQKREDSLASEYSVRDTLLLKSSSVSHVATEQMSEHLVMRSKSEHHISEKLQERLIEKESFSSQEFISENQGVHTHWDVIDNNGDALICWKSSETEQKSLDAKQVTEELAGTTLDLSVRLLGGTDEEKIAEHVIVGASEVLNISETRADMEMSRQDAFSDDATYVASDILEERSLSTVHEFGESEASTTFGVGKLVTKKPEKEEVGRSFSETRKLSQFSDITAISETTTDMDSEILRLPECDQSVTLISHKNQQKDVKDLKATVENTADQVTLLEKREVREQSADVKKKKFEVEDIEEVLPMIRRWAEILSMKASTSVEIQAENKLSKPEAQAESQKYLKTANLEINKINVNATHEEVMSATTALECKTSGQDVASIRLRDKSRERVEKKYQENQWNLLSTNAEWETLLNDLEDSVTIAQSVQDSMAFSVKASATVNLNSDTSIKKAQPEIGIQKSISQSNVEKTVGQFSSATIGNELLVTRLGMDLEEIETLVDEINREQAVGGRIREFGKSETGGGIYLVRRALPKVKETSTHTVTVATSFRQIFSTMSAGDEISEANVELTIPSTSVGAEIKSTVARSDSMTFSTSHASEYTASTVADYARDIAVSASTAARKKAIPTERTSQKLKEVGADGIEILSLWEGIETDLDATTQLVDLLRVKSSLQTIESSEEVERINQYLEMPEEKGLVIHLINVQNKETCERNFAVSICSLDTVHSRKSEIPPTYSVSKVLTEKRVLRETWRVIESGDVRFNAVINLHRYSLSKPTLAQETVLREVVRIAAQPLFISAEPTYMRTKESSEDIVGVGIAYNVPEENLISAIKLDEKASGGCYELTTKAAGDEYKMISSILSKTQAVEKVKGKMIQKVVAKDEIRVLETTTESVNANFNYEIPEENFKIGIAKTCANNAAPFTMRLHECLDFYVKMFYNMNKKDDFESLIKTIIISNGIESKTLSCTAAEHIEATRNPEFNRPAEFSDIQKTVVDYNKIEGASLNTFEALNEKMALSTMLSRQDDYSRVEHIVKDKNRGANLKFRFIESSEEKQTTFSAFEIDTEKEEIERTIDLVRQGGQFKLSTDAAEENEITLHRDISKPIITHYDTLHLITLSNSAPHQILSTSGASNELHTISTQLSKPAEWLNTELLIVDKNVEQPVTWRVLECEECVENLHPIYRRPDDIFDLDEIWHIARNGGKFERRCKASGDEKEIFEQEIKSRGIKDDIIDKKFIVGNQGEPTSFTTIQTSSVSASVSQDMSRLGEKEAIKKVLQNSNKGINVEKKMIEATEYRETISEQFRKNDEFDKADLTVKDRRAGGSYELSTNASEQSSSSVSNELICPRPSQLSIEKTFITAQTIIPAILSCKASESIGHTISEQWNRPNDQFAISQIVKDCNKENEQFTFREAGEEYHTTNCFYTREQEEKVIAKTLHEARKGSGQTFETKHATDRSMDASQHLEKDRLAEATAEKLFVIGNTAGPVSYSSKSSSDIQHSQVVNLSRPSPYVQVEIIRKGANLGTPTYFHARETTSKTENVATQLSRKEEKMEVSTTHTTPLLAEPVTFDSNASKSHSTSLDKNLVASEDYELDAVVIIVDNNTEQPQFFRCSCTKEASTSAAAALSAGSKSESCKIVRLASNLGHPTSLVLCESSSVQETNNVHYQRDEHHEHISETKSYPRDGGKFTLDTKASTANEVRIDKDLEKKSDRELETEIKTIVRNEGEPVEIFVSATEESAAGVTTSLSRANPFESANILLTSPNKGEPAYSRVTESSELTETNNVQLRREEEHQETEKIIEIAANGGSSLLRAGFADEKFADIEAKLGKDAQFESAQTIRQIGNEDKTNLSIGASQETSVTFDETVQCNKSSCEETSITKVAKNIEPHVIFRSTEASDMAVGIHYTLRSSEKVEETEEIKNIARNGGSATFSCFASGDESPDSVSAFLTRQPQEETTEKLFPTPMFDFIKFNSTAAEEFAVWNTTIFRRKDNEGEVEKIFNTSEAGHNETFSANAAEDVSVTLDADLHFGVGYKEHRQITKDEANQGEGTGMHSGASEETIFNLGYDYCKQPTEFTTVCVTEDKLLIQGAYGFRAAKEESITLDADLHFGVNYRDLLAMGLHASNNEIEGTGMRSTASEETIFNLAYDYCKQPTEFRTVFVSEDHQFVHGAFGFRAVGEEHIETQVLELQARMVEVMVEGSVHNLARRHEDEPFVLYTEVIEETIIRVDEQLEKKTTVIETEQASEVKMREKGEERRKEEKRVSFAAEVQEKTMEAIDKSLGLDTSMEVEPAFQKPSIIKKPMKKERERRSRDLRQNAAPAFKPVRRNSLLQALAIGSPHNIPHFKTLDDIVKAIKHAGLEYSNLIFGIDYTKSNFYQGERTFDKRPLHTIDPAEMNPYQQVIQIVGKTLSSFDADGQIPAYGFGDEEFTDHGIFNIAERYDLEKDCNGFEEVLRVYNEVTPTIEMSGPTNFVPLIDRAIEICKEKHSYHILVIVADGQVTNEKINQKAIAAASHYPLSIIMVGVGDGPWNMMGRFDDNIPKRLFDNFHFVDFHKVMFNAPNADASFALNALMEIPDQYKAIKELGLLKHSRRG.

Disordered regions lie at residues 1-61 (MNDY…RHSE), 269-360 (KEGN…NNSQ), 372-408 (SERKTAKQREQELLQRSERRSGGRTHSHEEYRRHQQP), 464-492 (GDRAHLQYRPRAQKGAAGPTTRGAPTSSV), 506-538 (STEPSPVPSRRALPKSASLSSVQQKQPIKTADG), 560-614 (DERA…QGPP), 1301-1358 (NRSE…DQQV), 4381-4427 (ELEP…RSES), and 6779-6800 (RDEHHEHISETKSYPRDGGKFT). The segment covering 12-25 (SSQKSNNQKISNNS) has biased composition (low complexity). The segment covering 269-282 (KEGNNPSCCRERGT) has biased composition (basic and acidic residues). The span at 302 to 313 (STSTKVAVTSAS) shows a compositional bias: low complexity. Positions 318–336 (IKDHKKQLKKEKEKKKKMD) are enriched in basic residues. The span at 372–404 (SERKTAKQREQELLQRSERRSGGRTHSHEEYRR) shows a compositional bias: basic and acidic residues. Over residues 522-532 (ASLSSVQQKQP) the composition is skewed to polar residues. Positions 560 to 587 (DERAKDFLRGDRSSRLSPQSERKNERQI) are enriched in basic and acidic residues. Over residues 588-597 (QIRQQSSGPT) the composition is skewed to polar residues. 2 stretches are compositionally biased toward basic and acidic residues: residues 598–611 (NRRETEIEYEEKRQ) and 1301–1335 (NRSELREMRSEEKRSNSMHHEESHYAHSSYEHTSE). Residues 4397–4409 (RQSRVYRSSSQVR) are compositionally biased toward low complexity. Composition is skewed to basic and acidic residues over residues 4411–4427 (PSEESIQKTEALRRSES) and 6779–6797 (RDEHHEHISETKSYPRDGG). Residues 7475-7673 (NLIFGIDYTK…FHKVMFNAPN (199 aa)) enclose the VWFA domain.

This sequence belongs to the copine family. As to expression, expressed in body wall muscle.

The chain is Copine family protein 2 (cpna-2) from Caenorhabditis elegans.